A 337-amino-acid chain; its full sequence is Anthranilate phosphoribosyltransferase (337 aa).

5-phospho-alpha-D-ribose 1-diphosphate contacts are provided by residues Gly-82, 85–86 (GD), Thr-90, 92–95 (NIST), 110–118 (KHGGRSVSS), and Ser-122. Gly-82 is an anthranilate binding site. A Mg(2+)-binding site is contributed by Ser-94. Arg-168 is a binding site for anthranilate. Asp-226 and Glu-227 together coordinate Mg(2+).

It belongs to the anthranilate phosphoribosyltransferase family. In terms of assembly, homodimer. The cofactor is Mg(2+).

The catalysed reaction is N-(5-phospho-beta-D-ribosyl)anthranilate + diphosphate = 5-phospho-alpha-D-ribose 1-diphosphate + anthranilate. Its pathway is amino-acid biosynthesis; L-tryptophan biosynthesis; L-tryptophan from chorismate: step 2/5. Catalyzes the transfer of the phosphoribosyl group of 5-phosphorylribose-1-pyrophosphate (PRPP) to anthranilate to yield N-(5'-phosphoribosyl)-anthranilate (PRA). This Francisella tularensis subsp. novicida (strain U112) protein is Anthranilate phosphoribosyltransferase.